The chain runs to 268 residues: Glutamate racemase (268 aa).

Substrate-binding positions include 10-11 (DS) and 42-43 (YG). The Proton donor/acceptor role is filled by Cys73. Substrate is bound at residue 74-75 (NT). Cys184 serves as the catalytic Proton donor/acceptor. 185-186 (TH) provides a ligand contact to substrate.

This sequence belongs to the aspartate/glutamate racemases family.

It catalyses the reaction L-glutamate = D-glutamate. Its pathway is cell wall biogenesis; peptidoglycan biosynthesis. In terms of biological role, provides the (R)-glutamate required for cell wall biosynthesis. This chain is Glutamate racemase, found in Limosilactobacillus fermentum (strain NBRC 3956 / LMG 18251) (Lactobacillus fermentum).